The chain runs to 263 residues: UPF0246 protein Strop_2927 (263 aa).

This sequence belongs to the UPF0246 family.

The chain is UPF0246 protein Strop_2927 from Salinispora tropica (strain ATCC BAA-916 / DSM 44818 / JCM 13857 / NBRC 105044 / CNB-440).